The chain runs to 93 residues: Phosphoribosyl-ATP pyrophosphatase (93 aa).

Belongs to the PRA-PH family.

It localises to the cytoplasm. It carries out the reaction 1-(5-phospho-beta-D-ribosyl)-ATP + H2O = 1-(5-phospho-beta-D-ribosyl)-5'-AMP + diphosphate + H(+). The protein operates within amino-acid biosynthesis; L-histidine biosynthesis; L-histidine from 5-phospho-alpha-D-ribose 1-diphosphate: step 2/9. In Mycobacterium sp. (strain JLS), this protein is Phosphoribosyl-ATP pyrophosphatase.